A 94-amino-acid chain; its full sequence is Neutrophil defensin 1 (94 aa).

A signal peptide spans 1–19 (MRTLAILAAILLVALQAQA). A propeptide spanning residues 20–64 (EPLQARADEVAAAPEQIPADNPEVVVSLAWDESLAPKHPGSRKNV) is cleaved from the precursor. Intrachain disulfides connect Cys-66/Cys-94, Cys-68/Cys-83, and Cys-73/Cys-93. Arg-78 is modified (ADP-ribosylarginine; by ART1). At Tyr-85 the chain carries Phosphotyrosine. Residue Arg-88 is modified to ADP-ribosylarginine; by ART1.

The protein belongs to the alpha-defensin family. As to quaternary structure, tetramer. Dimer. Interacts with RETN. In terms of processing, ADP-ribosylation drastically reduces cytotoxic and antibacterial activities, and enhances IL8 production.

The protein resides in the secreted. Functionally, effector molecule of the innate immune system that acts via antibiotic-like properties against a broad array of infectious agents including bacteria, fungi, and viruses or by promoting the activation and maturation of some APCs. Interacts with the essential precursor of cell wall synthesis lipid II to inhibit bacterial cell wall synthesis. Inhibits adenovirus infection via inhibition of viral disassembly at the vertex region, thereby restricting the release of internal capsid protein pVI, which is required for endosomal membrane penetration during cell entry. In addition, interaction with adenovirus capsid leads to the redirection of viral particles to TLR4 thereby promoting a NLRP3-mediated inflammasome response and interleukin 1-beta (IL-1beta) release. Induces the production of proinflammatory cytokines including type I interferon (IFN) in plasmacytoid dendritic cells (pDCs) by triggering the degradation of NFKBIA and nuclear translocation of IRF1, both of which are required for activation of pDCs. This is Neutrophil defensin 1 (DEFA1) from Pan troglodytes (Chimpanzee).